Reading from the N-terminus, the 439-residue chain is Argininosuccinate lyase (439 aa).

It belongs to the lyase 1 family. Argininosuccinate lyase subfamily.

The protein resides in the cytoplasm. The enzyme catalyses 2-(N(omega)-L-arginino)succinate = fumarate + L-arginine. Its pathway is amino-acid biosynthesis; L-arginine biosynthesis; L-arginine from L-ornithine and carbamoyl phosphate: step 3/3. This is Argininosuccinate lyase from Caldanaerobacter subterraneus subsp. tengcongensis (strain DSM 15242 / JCM 11007 / NBRC 100824 / MB4) (Thermoanaerobacter tengcongensis).